Here is a 276-residue protein sequence, read N- to C-terminus: MVVKIGIIKCGNIGTSPVLDLLLDERADRPNIDVCVVGSGAKMNPDEIERAVPTMLEMERDFVIFISPNPGAPGPAKARELLSAADVPAMIIGDAPGLRVKDEIEEQGLGYIIVKADPMIGARREFLDPTEMASFNSDVIKVLAFTGAYRVVQNTIDAMIADVEAGKAPELPQVVIDTDKAVEAAGYTNPYAKAKAMAAYEIATKVADIDVRGCFMVQDPDQYIPIVASAHEMLSAAAKLAIEAREIEKANDTVLRTPHGKEGKTLSKKDLLAKPE.

The segment at 253-276 (TVLRTPHGKEGKTLSKKDLLAKPE) is disordered. The span at 259–276 (HGKEGKTLSKKDLLAKPE) shows a compositional bias: basic and acidic residues.

This sequence belongs to the MTD family. In terms of assembly, found to be tightly associated with methyl-coenzyme M methylreductase.

The catalysed reaction is 5,10-methylenetetrahydromethanopterin + oxidized coenzyme F420-(gamma-L-Glu)(n) + 2 H(+) = 5,10-methenyl-5,6,7,8-tetrahydromethanopterin + reduced coenzyme F420-(gamma-L-Glu)(n). Its pathway is one-carbon metabolism; methanogenesis from CO(2); 5,10-methylene-5,6,7,8-tetrahydromethanopterin from 5,10-methenyl-5,6,7,8-tetrahydromethanopterin (coenzyme F420 route): step 1/1. With respect to regulation, activity requires salt; 100 mM sodium or potassium salts of chloride, phosphate or sulfate are equally effective. Not inactivated by O(2). Inhibited by hydrogen-producing 5,10-methenyltetrahydromethanopterin hydrogenase which has a higher affinity for their shared substrate. Enzyme is O(2)-stable and strictly dependent on coenzyme F420. Catalyzes the reversible reduction of methenyl-H(4)MPT(+) to methylene-H(4)MPT. The chain is F420-dependent methylenetetrahydromethanopterin dehydrogenase from Methanothermobacter marburgensis (strain ATCC BAA-927 / DSM 2133 / JCM 14651 / NBRC 100331 / OCM 82 / Marburg) (Methanobacterium thermoautotrophicum).